A 228-amino-acid chain; its full sequence is 7-cyano-7-deazaguanine synthase (228 aa).

ATP is bound at residue 8–18 (LSGGMDSATTL). Zn(2+) contacts are provided by Cys-188, Cys-198, Cys-201, and Cys-204.

It belongs to the QueC family. Zn(2+) serves as cofactor.

The catalysed reaction is 7-carboxy-7-deazaguanine + NH4(+) + ATP = 7-cyano-7-deazaguanine + ADP + phosphate + H2O + H(+). It participates in purine metabolism; 7-cyano-7-deazaguanine biosynthesis. Catalyzes the ATP-dependent conversion of 7-carboxy-7-deazaguanine (CDG) to 7-cyano-7-deazaguanine (preQ(0)). This is 7-cyano-7-deazaguanine synthase from Nitrosomonas europaea (strain ATCC 19718 / CIP 103999 / KCTC 2705 / NBRC 14298).